We begin with the raw amino-acid sequence, 317 residues long: MQNETRSLWPHKDLLDVDQLSKDELLHLLDTAAQFHEINRRPVKKVPTLKGKSVILFFAEPSTRTKTSFDVAGKRLSADTFSLAKSGSSLQKGESLKDTALTLEAMNPDVLVIRHSSSGAARFLAERLACGVVNAGDGWHAHPTQALLDCYSLRQVWGDTFEGRTLCILGDIAHSRVARSNVKLLTSLGVRVRLCAPRTLLPAGVGNWPVEVFTDLDAAVRDADAVMCLRLQLERQQAGLLPDLREYSNRYCLTPRRLELAKPEAKVLHPGPMNRGLEIASSIADAPASLVLDQVAAGVATRMAILFLLATRTDGGR.

R64 and T65 together coordinate carbamoyl phosphate. An L-aspartate-binding site is contributed by K92. Residues R114, H142, and Q145 each coordinate carbamoyl phosphate. L-aspartate contacts are provided by R176 and R230. Carbamoyl phosphate contacts are provided by G271 and P272.

It belongs to the aspartate/ornithine carbamoyltransferase superfamily. ATCase family. Heterododecamer (2C3:3R2) of six catalytic PyrB chains organized as two trimers (C3), and six regulatory PyrI chains organized as three dimers (R2).

The catalysed reaction is carbamoyl phosphate + L-aspartate = N-carbamoyl-L-aspartate + phosphate + H(+). It participates in pyrimidine metabolism; UMP biosynthesis via de novo pathway; (S)-dihydroorotate from bicarbonate: step 2/3. Functionally, catalyzes the condensation of carbamoyl phosphate and aspartate to form carbamoyl aspartate and inorganic phosphate, the committed step in the de novo pyrimidine nucleotide biosynthesis pathway. This chain is Aspartate carbamoyltransferase catalytic subunit, found in Nitratidesulfovibrio vulgaris (strain ATCC 29579 / DSM 644 / CCUG 34227 / NCIMB 8303 / VKM B-1760 / Hildenborough) (Desulfovibrio vulgaris).